Here is a 911-residue protein sequence, read N- to C-terminus: Nitrate reductase [NADH], clone PBNBR1412 (911 aa).

Residues 53-72 (NDAVDDSYDSSDDEDESHNR) form a disordered region. The span at 56 to 68 (VDDSYDSSDDEDE) shows a compositional bias: acidic residues. A Mo-molybdopterin-binding site is contributed by Cys191. Residues 539 to 614 (AKMYSMSEVR…LEDYRIGELI (76 aa)) form the Cytochrome b5 heme-binding domain. Heme contacts are provided by His574 and His597. The FAD-binding FR-type domain occupies 654 to 766 (REKVPVTLIE…KGPLGHIEYL (113 aa)). FAD contacts are provided by residues 706–709 (RAYT), 723–727 (VVKVY), Phe728, Phe735, 740–742 (LMS), and Thr793.

The protein belongs to the nitrate reductase family. In terms of assembly, homodimer. Requires FAD as cofactor. Heme is required as a cofactor. It depends on Mo-molybdopterin as a cofactor.

It carries out the reaction nitrite + NAD(+) + H2O = nitrate + NADH + H(+). In terms of biological role, nitrate reductase is a key enzyme involved in the first step of nitrate assimilation in plants, fungi and bacteria. The sequence is that of Nitrate reductase [NADH], clone PBNBR1412 (NIA2) from Brassica napus (Rape).